The chain runs to 329 residues: Acetyl-coenzyme A carboxylase carboxyl transferase subunit alpha (329 aa).

The region spanning 40–294 (QLETLAARRR…KNALEKHLSE (255 aa)) is the CoA carboxyltransferase C-terminal domain.

This sequence belongs to the AccA family. As to quaternary structure, acetyl-CoA carboxylase is a heterohexamer composed of biotin carboxyl carrier protein (AccB), biotin carboxylase (AccC) and two subunits each of ACCase subunit alpha (AccA) and ACCase subunit beta (AccD).

The protein localises to the cytoplasm. It carries out the reaction N(6)-carboxybiotinyl-L-lysyl-[protein] + acetyl-CoA = N(6)-biotinyl-L-lysyl-[protein] + malonyl-CoA. It functions in the pathway lipid metabolism; malonyl-CoA biosynthesis; malonyl-CoA from acetyl-CoA: step 1/1. Its function is as follows. Component of the acetyl coenzyme A carboxylase (ACC) complex. First, biotin carboxylase catalyzes the carboxylation of biotin on its carrier protein (BCCP) and then the CO(2) group is transferred by the carboxyltransferase to acetyl-CoA to form malonyl-CoA. The chain is Acetyl-coenzyme A carboxylase carboxyl transferase subunit alpha from Prochlorococcus marinus (strain NATL2A).